The chain runs to 328 residues: Trans-O-hydroxybenzylidenepyruvate hydratase-aldolase (328 aa).

This sequence belongs to the DapA family. Homotrimer.

The enzyme catalyses (3E)-4-(2-hydroxyphenyl)-2-oxobut-3-enoate + H2O = salicylaldehyde + pyruvate. It participates in aromatic compound metabolism; naphthalene degradation. With respect to regulation, inhibited bye p-chloromercuribenzoate and salicylaldehyde. Activated by salicylate. Functionally, involved in the naphthalene and naphthalenesulfonate catabolic pathway. Catalyzes the transformation of trans-O-hydroxybenzylidenepyruvate (THBPA) to salicylaldehyde and pyruvate. The reaction is reversible. Can also use 2,4-dihydroxybenzalpyruvate (2,4-DHBP) and 2,6-dihydroxybenzalpyruvate (2,6-DHBP). In Sphingobium xenophagum, this protein is Trans-O-hydroxybenzylidenepyruvate hydratase-aldolase (nsaE).